Here is a 43-residue protein sequence, read N- to C-terminus: Protein PsbN (43 aa).

The chain crosses the membrane as a helical span at residues 5-25 (TVLSIFISSLLLGITIYSIYI).

This sequence belongs to the PsbN family.

It localises to the plastid. Its subcellular location is the chloroplast thylakoid membrane. In terms of biological role, may play a role in photosystem I and II biogenesis. This chain is Protein PsbN, found in Gracilaria tenuistipitata var. liui (Red alga).